The chain runs to 588 residues: DNA mismatch repair protein MutL (588 aa).

This sequence belongs to the DNA mismatch repair MutL/HexB family.

This protein is involved in the repair of mismatches in DNA. It is required for dam-dependent methyl-directed DNA mismatch repair. May act as a 'molecular matchmaker', a protein that promotes the formation of a stable complex between two or more DNA-binding proteins in an ATP-dependent manner without itself being part of a final effector complex. In Fervidobacterium nodosum (strain ATCC 35602 / DSM 5306 / Rt17-B1), this protein is DNA mismatch repair protein MutL.